The following is a 145-amino-acid chain: Basic phospholipase A2 S2-22 (145 aa).

Residues 1–19 (MYPAHLLVLLAVCVSLLGA) form the signal peptide. A propeptide spanning residues 20 to 27 (SDIPPQPL) is cleaved from the precursor. 7 cysteine pairs are disulfide-bonded: cysteine 38–cysteine 99, cysteine 54–cysteine 144, cysteine 56–cysteine 72, cysteine 71–cysteine 127, cysteine 78–cysteine 120, cysteine 88–cysteine 113, and cysteine 106–cysteine 118. The Ca(2+) site is built by tyrosine 55, glycine 57, and glycine 59. Residue histidine 75 is part of the active site. Aspartate 76 lines the Ca(2+) pocket. Residue aspartate 121 is part of the active site.

It belongs to the phospholipase A2 family. Group I subfamily. D49 sub-subfamily. Ca(2+) serves as cofactor. Expressed by the venom gland.

The protein resides in the secreted. The catalysed reaction is a 1,2-diacyl-sn-glycero-3-phosphocholine + H2O = a 1-acyl-sn-glycero-3-phosphocholine + a fatty acid + H(+). Its function is as follows. Snake venom phospholipase A2 (PLA2) that inhibits collagen-induced platelet aggregation. PLA2 catalyzes the calcium-dependent hydrolysis of the 2-acyl groups in 3-sn-phosphoglycerides. This Austrelaps superbus (Lowland copperhead snake) protein is Basic phospholipase A2 S2-22.